Here is a 340-residue protein sequence, read N- to C-terminus: Glyceraldehyde-3-phosphate dehydrogenase (340 aa).

Residues 11–12 (SI) and Gly-111 each bind NAD(+). 140–142 (SCN) is a binding site for D-glyceraldehyde 3-phosphate. Catalysis depends on Cys-141, which acts as the Nucleophile. Arg-169 serves as a coordination point for NAD(+). 195 to 196 (HG) is a binding site for D-glyceraldehyde 3-phosphate. NAD(+) is bound at residue Gln-303.

It belongs to the glyceraldehyde-3-phosphate dehydrogenase family. Homotetramer.

Its subcellular location is the cytoplasm. It catalyses the reaction D-glyceraldehyde 3-phosphate + phosphate + NADP(+) = (2R)-3-phospho-glyceroyl phosphate + NADPH + H(+). The catalysed reaction is D-glyceraldehyde 3-phosphate + phosphate + NAD(+) = (2R)-3-phospho-glyceroyl phosphate + NADH + H(+). It participates in carbohydrate degradation; glycolysis; pyruvate from D-glyceraldehyde 3-phosphate: step 1/5. This chain is Glyceraldehyde-3-phosphate dehydrogenase, found in Methanococcus maripaludis (strain C5 / ATCC BAA-1333).